We begin with the raw amino-acid sequence, 257 residues long: Adenosylcobinamide-GDP ribazoletransferase (257 aa).

7 helical membrane passes run 30-50, 52-72, 109-129, 132-152, 175-195, 198-218, and 237-257; these read IVYF…IGWI, MLLF…VLIT, SLLA…DIIS, SLWV…LLTY, LITA…FIFL, NIVL…IILF, and GIEL…FMFF.

Belongs to the CobS family. Mg(2+) is required as a cofactor.

It localises to the cell membrane. It catalyses the reaction alpha-ribazole + adenosylcob(III)inamide-GDP = adenosylcob(III)alamin + GMP + H(+). The catalysed reaction is alpha-ribazole 5'-phosphate + adenosylcob(III)inamide-GDP = adenosylcob(III)alamin 5'-phosphate + GMP + H(+). It participates in cofactor biosynthesis; adenosylcobalamin biosynthesis; adenosylcobalamin from cob(II)yrinate a,c-diamide: step 7/7. Functionally, joins adenosylcobinamide-GDP and alpha-ribazole to generate adenosylcobalamin (Ado-cobalamin). Also synthesizes adenosylcobalamin 5'-phosphate from adenosylcobinamide-GDP and alpha-ribazole 5'-phosphate. The chain is Adenosylcobinamide-GDP ribazoletransferase from Clostridioides difficile (strain 630) (Peptoclostridium difficile).